The chain runs to 163 residues: Putative 4-hydroxy-4-methyl-2-oxoglutarate aldolase (163 aa).

Residues 76-79 and Arg98 each bind substrate; that span reads GDML. Asp99 is an a divalent metal cation binding site.

It belongs to the class II aldolase/RraA-like family. In terms of assembly, homotrimer. It depends on a divalent metal cation as a cofactor.

It catalyses the reaction 4-hydroxy-4-methyl-2-oxoglutarate = 2 pyruvate. The catalysed reaction is oxaloacetate + H(+) = pyruvate + CO2. In terms of biological role, catalyzes the aldol cleavage of 4-hydroxy-4-methyl-2-oxoglutarate (HMG) into 2 molecules of pyruvate. Also contains a secondary oxaloacetate (OAA) decarboxylase activity due to the common pyruvate enolate transition state formed following C-C bond cleavage in the retro-aldol and decarboxylation reactions. In Pseudomonas putida (strain ATCC 47054 / DSM 6125 / CFBP 8728 / NCIMB 11950 / KT2440), this protein is Putative 4-hydroxy-4-methyl-2-oxoglutarate aldolase.